Reading from the N-terminus, the 354-residue chain is Elongation factor Ts (354 aa).

Residues T81 to V84 are involved in Mg(2+) ion dislocation from EF-Tu.

It belongs to the EF-Ts family.

It localises to the cytoplasm. In terms of biological role, associates with the EF-Tu.GDP complex and induces the exchange of GDP to GTP. It remains bound to the aminoacyl-tRNA.EF-Tu.GTP complex up to the GTP hydrolysis stage on the ribosome. The protein is Elongation factor Ts of Campylobacter concisus (strain 13826).